A 162-amino-acid polypeptide reads, in one-letter code: Transcription antitermination protein RfaH (162 aa).

This sequence belongs to the RfaH family. As to quaternary structure, interacts with both the nontemplate DNA and the RNA polymerase (RNAP).

Enhances distal genes transcription elongation in a specialized subset of operons that encode extracytoplasmic components. RfaH is recruited into a multi-component RNA polymerase complex by the ops element, which is a short conserved DNA sequence located downstream of the main promoter of these operons. Once bound, RfaH suppresses pausing and inhibits Rho-dependent and intrinsic termination at a subset of sites. Termination signals are bypassed, which allows complete synthesis of long RNA chains. Also negatively controls expression and surface presentation of AG43 and possibly another AG43-independent factor that mediates cell-cell interactions and biofilm formation,. The sequence is that of Transcription antitermination protein RfaH from Escherichia coli O6:K15:H31 (strain 536 / UPEC).